A 178-amino-acid polypeptide reads, in one-letter code: Large ribosomal subunit protein uL6 (178 aa).

It belongs to the universal ribosomal protein uL6 family. As to quaternary structure, part of the 50S ribosomal subunit.

Functionally, this protein binds to the 23S rRNA, and is important in its secondary structure. It is located near the subunit interface in the base of the L7/L12 stalk, and near the tRNA binding site of the peptidyltransferase center. The chain is Large ribosomal subunit protein uL6 from Coxiella burnetii (strain CbuK_Q154) (Coxiella burnetii (strain Q154)).